A 471-amino-acid chain; its full sequence is Argininosuccinate lyase (471 aa).

The protein belongs to the lyase 1 family. Argininosuccinate lyase subfamily.

It is found in the cytoplasm. The enzyme catalyses 2-(N(omega)-L-arginino)succinate = fumarate + L-arginine. Its pathway is amino-acid biosynthesis; L-arginine biosynthesis; L-arginine from L-ornithine and carbamoyl phosphate: step 3/3. This is Argininosuccinate lyase from Paramagnetospirillum magneticum (strain ATCC 700264 / AMB-1) (Magnetospirillum magneticum).